Reading from the N-terminus, the 233-residue chain is Phosphonates import ATP-binding protein PhnC 1 (233 aa).

One can recognise an ABC transporter domain in the interval 2–227 (LSVSGLTKRY…PAAALDREDI (226 aa)). An ATP-binding site is contributed by 34–41 (GRSGAGKT).

This sequence belongs to the ABC transporter superfamily. Phosphonates importer (TC 3.A.1.9.1) family. As to quaternary structure, the complex is composed of two ATP-binding proteins (PhnC), two transmembrane proteins (PhnE) and a solute-binding protein (PhnD).

Its subcellular location is the cell membrane. The catalysed reaction is phosphonate(out) + ATP + H2O = phosphonate(in) + ADP + phosphate + H(+). Its function is as follows. Part of the ABC transporter complex PhnCDE involved in phosphonates import. Responsible for energy coupling to the transport system. The sequence is that of Phosphonates import ATP-binding protein PhnC 1 from Natronomonas pharaonis (strain ATCC 35678 / DSM 2160 / CIP 103997 / JCM 8858 / NBRC 14720 / NCIMB 2260 / Gabara) (Halobacterium pharaonis).